The chain runs to 360 residues: GTP 3',8-cyclase 2 (360 aa).

The Radical SAM core domain maps to 33–259 (TFGRVANDLR…PDPAPRGSAP (227 aa)). Arg42 contributes to the GTP binding site. Residues Cys49 and Cys53 each contribute to the [4Fe-4S] cluster site. Tyr55 contacts S-adenosyl-L-methionine. Cys56 lines the [4Fe-4S] cluster pocket. Arg93 is a GTP binding site. S-adenosyl-L-methionine is bound at residue Gly97. A GTP-binding site is contributed by Thr124. Ser148 contributes to the S-adenosyl-L-methionine binding site. Lys185 lines the GTP pocket. Met219 contributes to the S-adenosyl-L-methionine binding site. Residues Cys287 and Cys290 each contribute to the [4Fe-4S] cluster site. Residue 292-294 (RTR) participates in GTP binding. Position 304 (Cys304) interacts with [4Fe-4S] cluster.

It belongs to the radical SAM superfamily. MoaA family. In terms of assembly, monomer and homodimer. It depends on [4Fe-4S] cluster as a cofactor.

It carries out the reaction GTP + AH2 + S-adenosyl-L-methionine = (8S)-3',8-cyclo-7,8-dihydroguanosine 5'-triphosphate + 5'-deoxyadenosine + L-methionine + A + H(+). It participates in cofactor biosynthesis; molybdopterin biosynthesis. Catalyzes the cyclization of GTP to (8S)-3',8-cyclo-7,8-dihydroguanosine 5'-triphosphate. The protein is GTP 3',8-cyclase 2 of Mycobacterium bovis (strain ATCC BAA-935 / AF2122/97).